The sequence spans 284 residues: Elongation factor Ts (284 aa).

Residues 80 to 83 (TDFV) form an involved in Mg(2+) ion dislocation from EF-Tu region.

Belongs to the EF-Ts family.

It is found in the cytoplasm. In terms of biological role, associates with the EF-Tu.GDP complex and induces the exchange of GDP to GTP. It remains bound to the aminoacyl-tRNA.EF-Tu.GTP complex up to the GTP hydrolysis stage on the ribosome. This is Elongation factor Ts from Photobacterium profundum (strain SS9).